The following is a 379-amino-acid chain: Queuine tRNA-ribosyltransferase (379 aa).

Asp-93 functions as the Proton acceptor in the catalytic mechanism. Substrate-binding positions include 93 to 97 (DSGGF), Asp-147, Gln-191, and Gly-218. The RNA binding stretch occupies residues 249-255 (GVGKPED). Asp-268 (nucleophile) is an active-site residue. Residues 273-277 (TRNAR) are RNA binding; important for wobble base 34 recognition. Zn(2+)-binding residues include Cys-306, Cys-308, Cys-311, and His-337.

The protein belongs to the queuine tRNA-ribosyltransferase family. As to quaternary structure, homodimer. Within each dimer, one monomer is responsible for RNA recognition and catalysis, while the other monomer binds to the replacement base PreQ1. It depends on Zn(2+) as a cofactor.

The enzyme catalyses 7-aminomethyl-7-carbaguanine + guanosine(34) in tRNA = 7-aminomethyl-7-carbaguanosine(34) in tRNA + guanine. Its pathway is tRNA modification; tRNA-queuosine biosynthesis. Its function is as follows. Catalyzes the base-exchange of a guanine (G) residue with the queuine precursor 7-aminomethyl-7-deazaguanine (PreQ1) at position 34 (anticodon wobble position) in tRNAs with GU(N) anticodons (tRNA-Asp, -Asn, -His and -Tyr). Catalysis occurs through a double-displacement mechanism. The nucleophile active site attacks the C1' of nucleotide 34 to detach the guanine base from the RNA, forming a covalent enzyme-RNA intermediate. The proton acceptor active site deprotonates the incoming PreQ1, allowing a nucleophilic attack on the C1' of the ribose to form the product. After dissociation, two additional enzymatic reactions on the tRNA convert PreQ1 to queuine (Q), resulting in the hypermodified nucleoside queuosine (7-(((4,5-cis-dihydroxy-2-cyclopenten-1-yl)amino)methyl)-7-deazaguanosine). This is Queuine tRNA-ribosyltransferase from Mannheimia succiniciproducens (strain KCTC 0769BP / MBEL55E).